Reading from the N-terminus, the 230-residue chain is TPR repeat-containing protein BB_0298 (230 aa).

2 TPR repeats span residues 69–102 (ARFF…NPNN) and 183–216 (FEFL…ASTE).

The protein is TPR repeat-containing protein BB_0298 of Borreliella burgdorferi (strain ATCC 35210 / DSM 4680 / CIP 102532 / B31) (Borrelia burgdorferi).